Here is a 157-residue protein sequence, read N- to C-terminus: XylDLEGF operon transcriptional activator 2 (157 aa).

Residues 39 to 140 (ERVVQFIEEN…GELPSDTLSL (102 aa)) enclose the HTH araC/xylS-type domain. 2 DNA-binding regions (H-T-H motif) span residues 56–77 (EQLA…EKHT) and 107–130 (ITEV…RSTF).

The protein localises to the cytoplasm. In terms of biological role, regulatory protein of the TOL plasmid xyl operons. XylS activates the xylXYZLTEGFJQKIH operon required for the degradation of toluene, m-xylene and p-xylene. The sequence is that of XylDLEGF operon transcriptional activator 2 (xylS2) from Pseudomonas putida (Arthrobacter siderocapsulatus).